Consider the following 277-residue polypeptide: Hemin import ATP-binding protein HmuV (277 aa).

The ABC transporter domain maps to Val19–Arg259. Residue Gly51–Ser58 participates in ATP binding.

The protein belongs to the ABC transporter superfamily. Heme (hemin) importer (TC 3.A.1.14.5) family. In terms of assembly, the complex is composed of two ATP-binding proteins (HmuV), two transmembrane proteins (HmuU) and a solute-binding protein (HmuT).

Its subcellular location is the cell membrane. In terms of biological role, part of the ABC transporter complex HmuTUV involved in hemin import. Responsible for energy coupling to the transport system. In Deinococcus geothermalis (strain DSM 11300 / CIP 105573 / AG-3a), this protein is Hemin import ATP-binding protein HmuV.